The primary structure comprises 371 residues: Queuine tRNA-ribosyltransferase (371 aa).

Asp89 functions as the Proton acceptor in the catalytic mechanism. Substrate-binding positions include 89–93 (DSGGF), Asp143, Gln185, and Gly212. Residues 243–249 (GVGKPED) are RNA binding. Asp262 functions as the Nucleophile in the catalytic mechanism. An RNA binding; important for wobble base 34 recognition region spans residues 267–271 (TRNAR). Residues Cys300, Cys302, Cys305, and His331 each coordinate Zn(2+).

It belongs to the queuine tRNA-ribosyltransferase family. Homodimer. Within each dimer, one monomer is responsible for RNA recognition and catalysis, while the other monomer binds to the replacement base PreQ1. Zn(2+) serves as cofactor.

The enzyme catalyses 7-aminomethyl-7-carbaguanine + guanosine(34) in tRNA = 7-aminomethyl-7-carbaguanosine(34) in tRNA + guanine. It functions in the pathway tRNA modification; tRNA-queuosine biosynthesis. In terms of biological role, catalyzes the base-exchange of a guanine (G) residue with the queuine precursor 7-aminomethyl-7-deazaguanine (PreQ1) at position 34 (anticodon wobble position) in tRNAs with GU(N) anticodons (tRNA-Asp, -Asn, -His and -Tyr). Catalysis occurs through a double-displacement mechanism. The nucleophile active site attacks the C1' of nucleotide 34 to detach the guanine base from the RNA, forming a covalent enzyme-RNA intermediate. The proton acceptor active site deprotonates the incoming PreQ1, allowing a nucleophilic attack on the C1' of the ribose to form the product. After dissociation, two additional enzymatic reactions on the tRNA convert PreQ1 to queuine (Q), resulting in the hypermodified nucleoside queuosine (7-(((4,5-cis-dihydroxy-2-cyclopenten-1-yl)amino)methyl)-7-deazaguanosine). This chain is Queuine tRNA-ribosyltransferase, found in Pseudomonas syringae pv. tomato (strain ATCC BAA-871 / DC3000).